The primary structure comprises 356 residues: MHTPLLDLTGLTREALTSLVVEQLGEKPFRARQLWSWLHVKLAQHLDEMSDLSIDFRRKLSALSTPLRPEVSTHQISRDGTEKWLLRLSDGQQIETVYIPEDERGTLCISSQVGCTLSCPFCHTGAQGFARNLTPSEIVQQVLFARRTLAARDKRVTNIVLMGMGEPLYNYEAVRDAVLILLDDSGLAFGTRKVTLSTAGLLPKMEQAGRELGVNLAISLHAVRDTLRDELVPLNKKYNLQALRAATLRYPLKSGRRVTWEYVMLHGVNDSEDDARLFVSFLKDIPSKINLIPFNPWPGVPYQSSSMTRIAAFQKILYQAGFVTVIRDRRGEDIDAACGQLKGAVQGARPRPPGAS.

E95 (proton acceptor) is an active-site residue. The Radical SAM core domain occupies 101-332; it reads EDERGTLCIS…VTVIRDRRGE (232 aa). A disulfide bond links C108 and C338. Residues C115, C119, and C122 each contribute to the [4Fe-4S] cluster site. S-adenosyl-L-methionine contacts are provided by residues 165-166, S197, 219-221, and N295; these read GE and SLH. C338 (S-methylcysteine intermediate) is an active-site residue.

This sequence belongs to the radical SAM superfamily. RlmN family. Requires [4Fe-4S] cluster as cofactor.

Its subcellular location is the cytoplasm. It carries out the reaction adenosine(2503) in 23S rRNA + 2 reduced [2Fe-2S]-[ferredoxin] + 2 S-adenosyl-L-methionine = 2-methyladenosine(2503) in 23S rRNA + 5'-deoxyadenosine + L-methionine + 2 oxidized [2Fe-2S]-[ferredoxin] + S-adenosyl-L-homocysteine. The enzyme catalyses adenosine(37) in tRNA + 2 reduced [2Fe-2S]-[ferredoxin] + 2 S-adenosyl-L-methionine = 2-methyladenosine(37) in tRNA + 5'-deoxyadenosine + L-methionine + 2 oxidized [2Fe-2S]-[ferredoxin] + S-adenosyl-L-homocysteine. In terms of biological role, specifically methylates position 2 of adenine 2503 in 23S rRNA and position 2 of adenine 37 in tRNAs. m2A2503 modification seems to play a crucial role in the proofreading step occurring at the peptidyl transferase center and thus would serve to optimize ribosomal fidelity. This is Dual-specificity RNA methyltransferase RlmN from Magnetococcus marinus (strain ATCC BAA-1437 / JCM 17883 / MC-1).